Reading from the N-terminus, the 217-residue chain is Gas vesicle protein F2 (217 aa).

It belongs to the gas vesicle GvpF/GvpL family. As to quaternary structure, binds GvpA.

The protein localises to the gas vesicle. It localises to the cytoplasm. In terms of biological role, a minor component of the gas vesicle, may be involved in preventing GvpA aggregation during gas vesicle nucleation. Gas vesicles are hollow, gas filled proteinaceous nanostructures found in several microbial planktonic microorganisms. They allow positioning of halobacteria at the optimal depth for growth in the poorly aerated, shallow brine pools of their habitat. Functionally, expression of 2 c-vac DNA fragments containing 2 divergently transcribed regions (gvpE-gvpF-gvpG-gvpH-gvpI-gvpJ-gvpK-gvpL-gvpM and gvpA-gvpC-gvpN-gvpO) allows H.volcanii to produce gas vesicles. Note that gvpD is not necessary for gas vesicle formation. The sequence is that of Gas vesicle protein F2 from Halobacterium salinarum (strain ATCC 700922 / JCM 11081 / NRC-1) (Halobacterium halobium).